Here is a 166-residue protein sequence, read N- to C-terminus: Crossover junction endodeoxyribonuclease RuvC (166 aa).

Active-site residues include Asp-7, Glu-67, and Asp-140. The Mg(2+) site is built by Asp-7, Glu-67, and Asp-140.

This sequence belongs to the RuvC family. As to quaternary structure, homodimer which binds Holliday junction (HJ) DNA. The HJ becomes 2-fold symmetrical on binding to RuvC with unstacked arms; it has a different conformation from HJ DNA in complex with RuvA. In the full resolvosome a probable DNA-RuvA(4)-RuvB(12)-RuvC(2) complex forms which resolves the HJ. The cofactor is Mg(2+).

The protein localises to the cytoplasm. The enzyme catalyses Endonucleolytic cleavage at a junction such as a reciprocal single-stranded crossover between two homologous DNA duplexes (Holliday junction).. In terms of biological role, the RuvA-RuvB-RuvC complex processes Holliday junction (HJ) DNA during genetic recombination and DNA repair. Endonuclease that resolves HJ intermediates. Cleaves cruciform DNA by making single-stranded nicks across the HJ at symmetrical positions within the homologous arms, yielding a 5'-phosphate and a 3'-hydroxyl group; requires a central core of homology in the junction. The consensus cleavage sequence is 5'-(A/T)TT(C/G)-3'. Cleavage occurs on the 3'-side of the TT dinucleotide at the point of strand exchange. HJ branch migration catalyzed by RuvA-RuvB allows RuvC to scan DNA until it finds its consensus sequence, where it cleaves and resolves the cruciform DNA. The sequence is that of Crossover junction endodeoxyribonuclease RuvC from Ruminiclostridium cellulolyticum (strain ATCC 35319 / DSM 5812 / JCM 6584 / H10) (Clostridium cellulolyticum).